Consider the following 277-residue polypeptide: R-spondin-3 (277 aa).

A signal peptide spans 1–21 (MHLRLISCFFIILNFMEYIGS). FU repeat units follow at residues 35-86 (PNVS…GYYG) and 92-135 (INKC…GLEA). Asn36 carries N-linked (GlcNAc...) asparagine glycosylation. Intrachain disulfides connect Cys41/Cys48, Cys45/Cys54, Cys57/Cys76, Cys80/Cys95, Cys98/Cys105, Cys102/Cys111, Cys114/Cys125, Cys129/Cys142, Cys148/Cys190, Cys159/Cys166, and Cys199/Cys206. Positions 147–207 (HCEASEWSPW…TCIVQRKKCS (61 aa)) constitute a TSP type-1 domain. Positions 210–277 (ERGKKGRERK…QKSVSVSTVH (68 aa)) are disordered. Positions 213–223 (KKGRERKRKKL) are enriched in basic residues. Low complexity predominate over residues 232–245 (SSSSDSKGLESSIE).

This sequence belongs to the R-spondin family. Interacts with the extracellular domain of FZD8 and LRP6. It however does not form a ternary complex with FZD8 and LRP6. Interacts with WNT1. Binds heparin. Interacts with LGR4, LGR5 and LGR6. In terms of tissue distribution, highly expressed in endothelial cells.

The protein localises to the secreted. Functionally, activator of the canonical Wnt signaling pathway by acting as a ligand for LGR4-6 receptors, which acts as a key regulator of angiogenesis. Upon binding to LGR4-6 (LGR4, LGR5 or LGR6), LGR4-6 associate with phosphorylated LRP6 and frizzled receptors that are activated by extracellular Wnt receptors, triggering the canonical Wnt signaling pathway to increase expression of target genes. Also regulates the canonical Wnt/beta-catenin-dependent pathway and non-canonical Wnt signaling by acting as an inhibitor of ZNRF3, an important regulator of the Wnt signaling pathway. Acts as a ligand for frizzled FZD8 and LRP6. May negatively regulate the TGF-beta pathway. Acts as a key regulator of angiogenesis by controlling vascular stability and pruning: acts by activating the non-canonical Wnt signaling pathway in endothelial cells. Can also amplify Wnt signaling pathway independently of LGR4-6 receptors, possibly by acting as a direct antagonistic ligand to RNF43 and ZNRF3. The sequence is that of R-spondin-3 (Rspo3) from Mus musculus (Mouse).